The chain runs to 280 residues: 2-dehydro-3-deoxyphosphooctonate aldolase (280 aa).

Belongs to the KdsA family.

The protein localises to the cytoplasm. The enzyme catalyses D-arabinose 5-phosphate + phosphoenolpyruvate + H2O = 3-deoxy-alpha-D-manno-2-octulosonate-8-phosphate + phosphate. It participates in carbohydrate biosynthesis; 3-deoxy-D-manno-octulosonate biosynthesis; 3-deoxy-D-manno-octulosonate from D-ribulose 5-phosphate: step 2/3. The protein operates within bacterial outer membrane biogenesis; lipopolysaccharide biosynthesis. The polypeptide is 2-dehydro-3-deoxyphosphooctonate aldolase (Thiobacillus denitrificans (strain ATCC 25259 / T1)).